We begin with the raw amino-acid sequence, 513 residues long: Histidine--tRNA ligase (513 aa).

Residues 1-24 constitute a mitochondrion transit peptide; sequence MADKAQLQEAIKTQGEVVRKLKSE. The region spanning 3 to 59 is the WHEP-TRS domain; the sequence is DKAQLQEAIKTQGEVVRKLKSEKASKEQIDEEVARLLQLKAQLGGDEGKHVFVLKTA. L-histidine is bound by residues 130-132, Arg157, Gln173, Asp177, Arg326, and 330-331; these read DLT and YY.

Belongs to the class-II aminoacyl-tRNA synthetase family.

It is found in the cytoplasm. The protein resides in the mitochondrion. The catalysed reaction is tRNA(His) + L-histidine + ATP = L-histidyl-tRNA(His) + AMP + diphosphate + H(+). Its function is as follows. Catalyzes the aminoacylation of histidyl-tRNA. This chain is Histidine--tRNA ligase, found in Danio rerio (Zebrafish).